The chain runs to 487 residues: Malonate-semialdehyde dehydrogenase 2 (487 aa).

5 residues coordinate NAD(+): Phe154, Lys178, Glu181, Arg182, and Ser231. The active-site Nucleophile is the Cys286. NAD(+) is bound at residue Glu386.

It belongs to the aldehyde dehydrogenase family. IolA subfamily. Homotetramer.

It catalyses the reaction 3-oxopropanoate + NAD(+) + CoA + H2O = hydrogencarbonate + acetyl-CoA + NADH + H(+). It carries out the reaction 2-methyl-3-oxopropanoate + NAD(+) + CoA + H2O = propanoyl-CoA + hydrogencarbonate + NADH + H(+). It functions in the pathway polyol metabolism; myo-inositol degradation into acetyl-CoA; acetyl-CoA from myo-inositol: step 7/7. Catalyzes the oxidation of malonate semialdehyde (MSA) and methylmalonate semialdehyde (MMSA) into acetyl-CoA and propanoyl-CoA, respectively. Is involved in a myo-inositol catabolic pathway. Bicarbonate, and not CO2, is the end-product of the enzymatic reaction. The sequence is that of Malonate-semialdehyde dehydrogenase 2 from Bacillus thuringiensis subsp. konkukian (strain 97-27).